A 220-amino-acid chain; its full sequence is Probable septum site-determining protein MinC (220 aa).

This sequence belongs to the MinC family. As to quaternary structure, interacts with MinD and FtsZ.

Cell division inhibitor that blocks the formation of polar Z ring septums. Rapidly oscillates between the poles of the cell to destabilize FtsZ filaments that have formed before they mature into polar Z rings. Prevents FtsZ polymerization. In Vibrio vulnificus (strain CMCP6), this protein is Probable septum site-determining protein MinC.